Consider the following 237-residue polypeptide: Ras-related protein Rab-33A (237 aa).

Residues N46, V47, G48, K49, T50, C51, T65, and T68 each coordinate GTP. Mg(2+) is bound at residue T50. Positions 59-71 (GTFPDKTEATIGV) match the Switch 1 motif. 2 residues coordinate Mg(2+): T68 and D91. A Switch 2 motif is present at residues 92 to 111 (TAGQERFRKSMVEHYYRNVH). G94, N151, K152, D154, A182, and K183 together coordinate GTP. S-geranylgeranyl cysteine attachment occurs at residues C235 and C237. A Cysteine methyl ester modification is found at C237.

It belongs to the small GTPase superfamily. Rab family. As to quaternary structure, interacts with ATG16L1; the interaction is important for autophagosome formation. It depends on Mg(2+) as a cofactor. Expressed predominantly in brain. Weak expression in ovary.

It is found in the cell membrane. The enzyme catalyses GTP + H2O = GDP + phosphate + H(+). With respect to regulation, regulated by guanine nucleotide exchange factors (GEFs) which promote the exchange of bound GDP for free GTP. Regulated by GTPase activating proteins (GAPs) which increase the GTP hydrolysis activity. Inhibited by GDP dissociation inhibitors (GDIs). In terms of biological role, the small GTPases Rab are key regulators of intracellular membrane trafficking, from the formation of transport vesicles to their fusion with membranes. Rabs cycle between an inactive GDP-bound form and an active GTP-bound form that is able to recruit to membranes different sets of downstream effectors directly responsible for vesicle formation, movement, tethering and fusion. Modulates autophagosome formation through interaction with ATG16L1. The polypeptide is Ras-related protein Rab-33A (Mus musculus (Mouse)).